The chain runs to 478 residues: Sialidase-4 (478 aa).

Residues 22 to 25 carry the FRIP motif motif; it reads YRVP. Residues arginine 23 and arginine 43 each contribute to the substrate site. Active-site proton acceptor residues include aspartate 47 and aspartate 48. One copy of the BNR 1 repeat lies at 127–138; it reads VTSCDAGLTWGS. Substrate is bound by residues tyrosine 177 and tyrosine 179. Residues 200-211 form a BNR 2 repeat; sequence FYSDDHGISWHC. Substrate is bound by residues glutamate 222 and arginine 238. One copy of the BNR 3 repeat lies at 247 to 258; sequence ALSADEGTSFLP. 2 disordered regions span residues 285-307 and 335-359; these read IEPQ…CFNL and SRSP…PECP. Arginine 383 is a substrate binding site. Tyrosine 413 acts as the Nucleophile in catalysis. Glutamate 434 is an active-site residue.

This sequence belongs to the glycosyl hydrolase 33 family. In terms of tissue distribution, highly expressed in brain, particularly in hippocampus, and at lower levels in liver and spleen. Expressed in hippocampal neurons (at protein level).

The protein localises to the cell membrane. It is found in the endoplasmic reticulum membrane. The protein resides in the microsome membrane. It localises to the mitochondrion inner membrane. Its subcellular location is the mitochondrion outer membrane. The protein localises to the cell projection. It is found in the neuron projection. The protein resides in the lysosome lumen. The enzyme catalyses Hydrolysis of alpha-(2-&gt;3)-, alpha-(2-&gt;6)-, alpha-(2-&gt;8)- glycosidic linkages of terminal sialic acid residues in oligosaccharides, glycoproteins, glycolipids, colominic acid and synthetic substrates.. It carries out the reaction a ganglioside GM3 + H2O = a beta-D-galactosyl-(1-&gt;4)-beta-D-glucosyl-(1&lt;-&gt;1)-ceramide + N-acetylneuraminate. It catalyses the reaction a ganglioside GM3 (d18:1(4E)) + H2O = a beta-D-Gal-(1-&gt;4)-beta-D-Glc-(1&lt;-&gt;1)-Cer(d18:1(4E)) + N-acetylneuraminate. The catalysed reaction is a ganglioside GM2 + H2O = a ganglioside GA2 + N-acetylneuraminate. The enzyme catalyses a ganglioside GM2 (d18:1(4E)) + H2O = a ganglioside GA2 (d18:1(4E)) + N-acetylneuraminate. It carries out the reaction a ganglioside GD1a + H2O = a ganglioside GM1 + N-acetylneuraminate. It catalyses the reaction a ganglioside GD1a (d18:1(4E)) + H2O = a ganglioside GM1 (d18:1(4E)) + N-acetylneuraminate. The catalysed reaction is a ganglioside GD3 + H2O = a ganglioside GM3 + N-acetylneuraminate. The enzyme catalyses a ganglioside GD3 (d18:1(4E)) + H2O = a ganglioside GM3 (d18:1(4E)) + N-acetylneuraminate. In terms of biological role, exo-alpha-sialidase that catalyzes the hydrolytic cleavage of the terminal sialic acid (N-acetylneuraminic acid, Neu5Ac) of a glycan moiety in the catabolism of glycolipids, glycoproteins and oligosacharides. Efficiently hydrolyzes gangliosides including alpha-(2-&gt;3)-sialylated GD1a and GM3 and alpha-(2-&gt;8)-sialylated GD3. Hydrolyzes poly-alpha-(2-&gt;8)-sialylated neural cell adhesion molecule NCAM1 likely at growth cones, suppressing neurite outgrowth in hippocampal neurons. May desialylate sialyl Lewis A and X antigens at the cell surface, down-regulating these glycan epitopes recognized by SELE/E selectin in the initiation of cell adhesion and extravasation. Has sialidase activity toward mucin, fetuin and sialyllactose. The polypeptide is Sialidase-4 (Neu4) (Mus musculus (Mouse)).